The sequence spans 280 residues: Protein phosphatase 1 regulatory subunit 3B-A (280 aa).

The PP1-binding motif signature appears at R58 to F61. The region spanning R121 to A229 is the CBM21 domain.

In terms of assembly, interacts with glycogen, PPP1CC catalytic subunit of PP1 and PYGL. Associates with glycogen particles. Forms complexes with debranching enzyme, glycogen phosphorylase, glycogen synthase and phosphorylase kinase which is necessary for its regulation of PP1 activity.

In terms of biological role, acts as a glycogen-targeting subunit for phosphatase PP1. Facilitates interaction of the PP1 with enzymes of the glycogen metabolism and regulates its activity. Suppresses the rate at which PP1 dephosphorylates (inactivates) glycogen phosphorylase and enhances the rate at which it activates glycogen synthase and therefore limits glycogen breakdown. This chain is Protein phosphatase 1 regulatory subunit 3B-A (ppp1r3b-a), found in Xenopus laevis (African clawed frog).